The chain runs to 456 residues: Bifunctional protein GlmU (456 aa).

The pyrophosphorylase stretch occupies residues 1–229 (MLNNAMSVVI…LSEVEGVNNR (229 aa)). Residues 11 to 14 (LAAG), Lys25, Gln76, 81 to 82 (GT), 103 to 105 (YGD), Gly140, Glu154, Asn169, and Asn227 contribute to the UDP-N-acetyl-alpha-D-glucosamine site. Residue Asp105 participates in Mg(2+) binding. Asn227 serves as a coordination point for Mg(2+). Residues 230 to 250 (LQLSRLERVYQSEQAEKLLLA) form a linker region. The segment at 251 to 456 (GVMLRDPARF…EGWRRPVKKK (206 aa)) is N-acetyltransferase. The UDP-N-acetyl-alpha-D-glucosamine site is built by Arg333 and Lys351. Residue His363 is the Proton acceptor of the active site. The UDP-N-acetyl-alpha-D-glucosamine site is built by Tyr366 and Asn377. Acetyl-CoA-binding positions include Ala380, 386–387 (NY), Ser405, Ala423, and Arg440.

In the N-terminal section; belongs to the N-acetylglucosamine-1-phosphate uridyltransferase family. It in the C-terminal section; belongs to the transferase hexapeptide repeat family. Homotrimer. Requires Mg(2+) as cofactor.

The protein resides in the cytoplasm. It catalyses the reaction alpha-D-glucosamine 1-phosphate + acetyl-CoA = N-acetyl-alpha-D-glucosamine 1-phosphate + CoA + H(+). The catalysed reaction is N-acetyl-alpha-D-glucosamine 1-phosphate + UTP + H(+) = UDP-N-acetyl-alpha-D-glucosamine + diphosphate. It functions in the pathway nucleotide-sugar biosynthesis; UDP-N-acetyl-alpha-D-glucosamine biosynthesis; N-acetyl-alpha-D-glucosamine 1-phosphate from alpha-D-glucosamine 6-phosphate (route II): step 2/2. It participates in nucleotide-sugar biosynthesis; UDP-N-acetyl-alpha-D-glucosamine biosynthesis; UDP-N-acetyl-alpha-D-glucosamine from N-acetyl-alpha-D-glucosamine 1-phosphate: step 1/1. The protein operates within bacterial outer membrane biogenesis; LPS lipid A biosynthesis. Its function is as follows. Catalyzes the last two sequential reactions in the de novo biosynthetic pathway for UDP-N-acetylglucosamine (UDP-GlcNAc). The C-terminal domain catalyzes the transfer of acetyl group from acetyl coenzyme A to glucosamine-1-phosphate (GlcN-1-P) to produce N-acetylglucosamine-1-phosphate (GlcNAc-1-P), which is converted into UDP-GlcNAc by the transfer of uridine 5-monophosphate (from uridine 5-triphosphate), a reaction catalyzed by the N-terminal domain. The polypeptide is Bifunctional protein GlmU (Shigella dysenteriae serotype 1 (strain Sd197)).